Consider the following 426-residue polypeptide: Enolase (426 aa).

Position 163 (Gln-163) interacts with (2R)-2-phosphoglycerate. Glu-205 serves as the catalytic Proton donor. 3 residues coordinate Mg(2+): Asp-242, Glu-286, and Asp-313. Lys-338, Arg-367, Ser-368, and Lys-389 together coordinate (2R)-2-phosphoglycerate. Lys-338 (proton acceptor) is an active-site residue.

Belongs to the enolase family. The cofactor is Mg(2+).

The protein localises to the cytoplasm. The protein resides in the secreted. It localises to the cell surface. It carries out the reaction (2R)-2-phosphoglycerate = phosphoenolpyruvate + H2O. It participates in carbohydrate degradation; glycolysis; pyruvate from D-glyceraldehyde 3-phosphate: step 4/5. Functionally, catalyzes the reversible conversion of 2-phosphoglycerate (2-PG) into phosphoenolpyruvate (PEP). It is essential for the degradation of carbohydrates via glycolysis. In Helicobacter pylori (strain HPAG1), this protein is Enolase.